We begin with the raw amino-acid sequence, 487 residues long: UDP-N-acetylmuramate--L-alanine ligase (487 aa).

Residue 130 to 136 participates in ATP binding; it reads GTHGKTT.

This sequence belongs to the MurCDEF family.

Its subcellular location is the cytoplasm. It carries out the reaction UDP-N-acetyl-alpha-D-muramate + L-alanine + ATP = UDP-N-acetyl-alpha-D-muramoyl-L-alanine + ADP + phosphate + H(+). It functions in the pathway cell wall biogenesis; peptidoglycan biosynthesis. Cell wall formation. The protein is UDP-N-acetylmuramate--L-alanine ligase of Photobacterium profundum (strain SS9).